Consider the following 48-residue polypeptide: Small, acid-soluble spore protein P (48 aa).

The segment covering Met1–Lys12 has biased composition (basic and acidic residues). Residues Met1–Met48 form a disordered region. Residues Lys31–Met48 are compositionally biased toward basic residues.

The protein belongs to the SspP family.

Its subcellular location is the spore core. In Geobacillus kaustophilus (strain HTA426), this protein is Small, acid-soluble spore protein P.